We begin with the raw amino-acid sequence, 302 residues long: Acetyl-coenzyme A carboxylase carboxyl transferase subunit beta (302 aa).

The 270-residue stretch at 25 to 294 (VWTKCDSCGQ…PQEDIVTEAA (270 aa)) folds into the CoA carboxyltransferase N-terminal domain. Positions 29, 32, 48, and 51 each coordinate Zn(2+). A C4-type zinc finger spans residues 29 to 51 (CDSCGQVLYRAELERNLEVCPKC).

The protein belongs to the AccD/PCCB family. In terms of assembly, acetyl-CoA carboxylase is a heterohexamer composed of biotin carboxyl carrier protein (AccB), biotin carboxylase (AccC) and two subunits each of ACCase subunit alpha (AccA) and ACCase subunit beta (AccD). Zn(2+) serves as cofactor.

The protein resides in the cytoplasm. It carries out the reaction N(6)-carboxybiotinyl-L-lysyl-[protein] + acetyl-CoA = N(6)-biotinyl-L-lysyl-[protein] + malonyl-CoA. Its pathway is lipid metabolism; malonyl-CoA biosynthesis; malonyl-CoA from acetyl-CoA: step 1/1. Its function is as follows. Component of the acetyl coenzyme A carboxylase (ACC) complex. Biotin carboxylase (BC) catalyzes the carboxylation of biotin on its carrier protein (BCCP) and then the CO(2) group is transferred by the transcarboxylase to acetyl-CoA to form malonyl-CoA. This is Acetyl-coenzyme A carboxylase carboxyl transferase subunit beta from Erwinia tasmaniensis (strain DSM 17950 / CFBP 7177 / CIP 109463 / NCPPB 4357 / Et1/99).